A 170-amino-acid chain; its full sequence is Small ribosomal subunit protein bS16 (170 aa).

The interval 114-170 (EGGPTTEAAKPKKKAATSGAKKAAKAAEPEAAAPEAAEPEAAAPAEGGEQAESSTES) is disordered. The segment covering 142–170 (PEAAAPEAAEPEAAAPAEGGEQAESSTES) has biased composition (low complexity).

This sequence belongs to the bacterial ribosomal protein bS16 family.

The sequence is that of Small ribosomal subunit protein bS16 from Mycobacterium avium (strain 104).